We begin with the raw amino-acid sequence, 235 residues long: 7-carboxy-7-deazaguanine synthase (235 aa).

Substrate-binding positions include 25–27 and Arg-40; that span reads IQG. One can recognise a Radical SAM core domain in the interval 31–235; sequence FTGTYSVFVR…PRLHLLVQLP (205 aa). Cys-44, Cys-48, and Cys-51 together coordinate [4Fe-4S] cluster. Residue Thr-53 coordinates Mg(2+). Thr-85 contacts substrate. S-adenosyl-L-methionine-binding positions include Gly-87 and 135-137; that span reads SPK. Substrate is bound at residue Pro-235.

This sequence belongs to the radical SAM superfamily. 7-carboxy-7-deazaguanine synthase family. As to quaternary structure, homodimer. [4Fe-4S] cluster is required as a cofactor. It depends on S-adenosyl-L-methionine as a cofactor. The cofactor is Mg(2+).

The enzyme catalyses 6-carboxy-5,6,7,8-tetrahydropterin + H(+) = 7-carboxy-7-deazaguanine + NH4(+). Its pathway is purine metabolism; 7-cyano-7-deazaguanine biosynthesis. Its function is as follows. Catalyzes the complex heterocyclic radical-mediated conversion of 6-carboxy-5,6,7,8-tetrahydropterin (CPH4) to 7-carboxy-7-deazaguanine (CDG), a step common to the biosynthetic pathways of all 7-deazapurine-containing compounds. This Hyperthermus butylicus (strain DSM 5456 / JCM 9403 / PLM1-5) protein is 7-carboxy-7-deazaguanine synthase.